The following is a 628-amino-acid chain: Leucine-rich repeat and fibronectin type-III domain-containing protein 3 (628 aa).

The signal sequence occupies residues 1-16 (MAILPLLLCLLPLAPA). Residues 17-539 (SSPPQSATPS…PHAPFLGGTM (523 aa)) are Extracellular-facing. Residues 19–59 (PPQSATPSPCPRRCRCQTQSLPLSVLCPGAGLLFVPPSLDR) enclose the LRRNT domain. 7 LRR repeats span residues 60–83 (RAAE…ANMT), 84–105 (GLLH…AFAD), 108–129 (ALRA…QLRG), 132–153 (NLRH…ALDD), 157–178 (TLED…ALGR), 181–202 (NVNT…AFSR), and 205–226 (KLAR…PLFS). A glycan (N-linked (GlcNAc...) asparagine) is linked at Asn81. The region spanning 249 to 295 (NPLHCNCELVWLRRLAREDDLEACASPPALGGRYFWAVGEEEFVCEP) is the LRRCT domain. The region spanning 295–382 (PPVVTHRSPP…GEATAAVELT (88 aa)) is the Ig-like domain. The cysteines at positions 317 and 366 are disulfide-linked. Asn339, Asn348, and Asn393 each carry an N-linked (GlcNAc...) asparagine glycan. The disordered stretch occupies residues 382–430 (TVGPPPPPQLANSTSCDPPRDGDPDALTPPSAASASAKVADTGPPTDRG). The segment covering 406-422 (DALTPPSAASASAKVAD) has biased composition (low complexity). One can recognise a Fibronectin type-III domain in the interval 425-523 (PPTDRGVQVT…GCARFSTEPA (99 aa)). Asn462 carries N-linked (GlcNAc...) asparagine glycosylation. A helical transmembrane segment spans residues 540-560 (IIALGGVIVASVLVFIFVLLM). Over 561–628 (RYKVHGGQPP…WGPGHEPVGP (68 aa)) the chain is Cytoplasmic.

This sequence belongs to the LRFN family. In terms of assembly, can form heteromeric complexes with LRFN1, LRFN2, LRFN4 and LRFN5. Able to form homomeric complexes across cell junctions, between adjacent cells. Does not interact with DLG4. N-glycosylated.

It is found in the cell membrane. Its subcellular location is the cell projection. It localises to the axon. The protein resides in the dendrite. The protein localises to the synapse. It is found in the presynaptic cell membrane. Its subcellular location is the postsynaptic cell membrane. In terms of biological role, cell adhesion molecule that mediates homophilic cell-cell adhesion in a Ca(2+)-independent manner. Promotes neurite outgrowth in hippocampal neurons. This Homo sapiens (Human) protein is Leucine-rich repeat and fibronectin type-III domain-containing protein 3 (LRFN3).